A 483-amino-acid polypeptide reads, in one-letter code: Protein nucleotidyltransferase YdiU (483 aa).

ATP contacts are provided by Gly-100, Gly-102, Arg-103, Lys-123, Asp-135, Gly-136, Arg-189, and Arg-196. Catalysis depends on Asp-265, which acts as the Proton acceptor. Residues Asn-266 and Asp-275 each coordinate Mg(2+). Asp-275 lines the ATP pocket.

The protein belongs to the SELO family. Requires Mg(2+) as cofactor. It depends on Mn(2+) as a cofactor.

It catalyses the reaction L-seryl-[protein] + ATP = 3-O-(5'-adenylyl)-L-seryl-[protein] + diphosphate. The enzyme catalyses L-threonyl-[protein] + ATP = 3-O-(5'-adenylyl)-L-threonyl-[protein] + diphosphate. The catalysed reaction is L-tyrosyl-[protein] + ATP = O-(5'-adenylyl)-L-tyrosyl-[protein] + diphosphate. It carries out the reaction L-histidyl-[protein] + UTP = N(tele)-(5'-uridylyl)-L-histidyl-[protein] + diphosphate. It catalyses the reaction L-seryl-[protein] + UTP = O-(5'-uridylyl)-L-seryl-[protein] + diphosphate. The enzyme catalyses L-tyrosyl-[protein] + UTP = O-(5'-uridylyl)-L-tyrosyl-[protein] + diphosphate. In terms of biological role, nucleotidyltransferase involved in the post-translational modification of proteins. It can catalyze the addition of adenosine monophosphate (AMP) or uridine monophosphate (UMP) to a protein, resulting in modifications known as AMPylation and UMPylation. The protein is Protein nucleotidyltransferase YdiU of Gloeobacter violaceus (strain ATCC 29082 / PCC 7421).